The primary structure comprises 402 residues: Type II NADH:quinone oxidoreductase (402 aa).

FAD contacts are provided by residues 12 to 16, 39 to 40, and V83; these read GAGYA and NK. The active site involves E172. FAD is bound by residues D302, 319–320, and K379; that span reads AQ.

Belongs to the NADH dehydrogenase family. FAD serves as cofactor.

Its subcellular location is the cell membrane. The catalysed reaction is a quinone + NADH + H(+) = a quinol + NAD(+). In terms of biological role, alternative, nonproton pumping NADH:quinone oxidoreductase that delivers electrons to the respiratory chain by oxidation of NADH and reduction of quinones, and contributes to the regeneration of NAD(+). The polypeptide is Type II NADH:quinone oxidoreductase (Staphylococcus epidermidis (strain ATCC 35984 / DSM 28319 / BCRC 17069 / CCUG 31568 / BM 3577 / RP62A)).